The primary structure comprises 649 residues: uncharacterized protein (649 aa).

It localises to the nucleus. It is found in the cytoplasm. This is an uncharacterized protein from Schizosaccharomyces pombe (strain 972 / ATCC 24843) (Fission yeast).